A 363-amino-acid polypeptide reads, in one-letter code: Peptide chain release factor 1 (363 aa).

Gln237 is subject to N5-methylglutamine.

The protein belongs to the prokaryotic/mitochondrial release factor family. In terms of processing, methylated by PrmC. Methylation increases the termination efficiency of RF1.

The protein localises to the cytoplasm. Its function is as follows. Peptide chain release factor 1 directs the termination of translation in response to the peptide chain termination codons UAG and UAA. The protein is Peptide chain release factor 1 of Mesoplasma florum (strain ATCC 33453 / NBRC 100688 / NCTC 11704 / L1) (Acholeplasma florum).